Reading from the N-terminus, the 387-residue chain is MTSHPVFIDLSLDEQVQELRKYFKKLGAEISSEKSNKGVEDDLHKIIGVCDVCFKDGEPSQIDGILNSIVSIMITIPLDRGENIVLAYCEKMTKAPNQPLAKVCLQSLWRLFNNLDTASPLRYHVYYHLVQVAKQCDQVLEVFTGVDQLKSQFANCPPSSEQMQKLYRLLHDVTKDTNLELSSKVMIELLGTYTADNACVAREDAMKCIVTALADPNTFLLDPLLSLKPVRFLEGDLIHDLLSIFVSDKLPSYVQFYEDHKEFVNSQGLNHEQNMKKMRLLTFMQLAESSPEMTFDTLTKELQITEDEVEPFVIEVLKTKLVRARLDQANRKVHISSTMHRTFGAPQWEQLRDLLQAWKENLSSVREGLTNVSAAQLDLARNQKLVH.

One can recognise a PCI domain in the interval 181–340 (LSSKVMIELL…RKVHISSTMH (160 aa)).

This sequence belongs to the eIF-3 subunit M family. Component of the eukaryotic translation initiation factor 3 (eIF-3) complex. The eIF-3 complex interacts with pix.

Its subcellular location is the cytoplasm. The protein localises to the golgi apparatus. Its function is as follows. Component of the eukaryotic translation initiation factor 3 (eIF-3) complex, which is involved in protein synthesis of a specialized repertoire of mRNAs and, together with other initiation factors, stimulates binding of mRNA and methionyl-tRNAi to the 40S ribosome. The eIF-3 complex specifically targets and initiates translation of a subset of mRNAs involved in cell proliferation. This is Eukaryotic translation initiation factor 3 subunit M from Drosophila ananassae (Fruit fly).